The following is a 162-amino-acid chain: Ribosome maturation factor RimP (162 aa).

Belongs to the RimP family.

The protein resides in the cytoplasm. Functionally, required for maturation of 30S ribosomal subunits. The chain is Ribosome maturation factor RimP from Syntrophotalea carbinolica (strain DSM 2380 / NBRC 103641 / GraBd1) (Pelobacter carbinolicus).